A 219-amino-acid polypeptide reads, in one-letter code: MASTEPERENREDETEVNEDEDTGAQVAPIVRLEEVAVTTGEEDEDAVLDLKSKMYRFDKEGNQWKERGAGTVKLLKHKETGKVRLVMRQSKTLKICANHLISSGMSVQEHSGNEKSCLWHATDFSDGELKDELFCIRFASIENCKTFMEKFTEIAESQQVGKESTQGDEAAGLIENLSVEENISEEKAKEAEEKEPAKEDKETKKEKVEEEKKTEAST.

Positions 1–11 are enriched in basic and acidic residues; the sequence is MASTEPERENR. 2 disordered regions span residues 1 to 30 and 160 to 219; these read MAST…VAPI and QVGK…EAST. Residues 12 to 23 are compositionally biased toward acidic residues; sequence EDETEVNEDEDT. The RanBD1 domain maps to 26 to 161; sequence QVAPIVRLEE…FTEIAESQQV (136 aa). The span at 185–219 shows a compositional bias: basic and acidic residues; sequence SEEKAKEAEEKEPAKEDKETKKEKVEEEKKTEAST.

The protein localises to the nucleus. It localises to the nuclear pore complex. The polypeptide is Ran-binding protein 1 homolog c (RANBP1C) (Arabidopsis thaliana (Mouse-ear cress)).